Here is a 236-residue protein sequence, read N- to C-terminus: MKMMDANEIISFIQNSTKSTPVKVYVKGELEGINFGESAKAFINGNTGVVFGEWSEIQTAIEENQSKIEDYVVENDRRNSAIPMLDLKNIKARIEPGAIIRDQVEIGDNAVIMMGASINIGSVIGEGTMIDMNVVLGGRATVGKNCHIGAGSVLAGVIEPPSAKPVVIEDDVVIGANAVVLEGVTVGKGAVVAAGAIVVNDVEPYTVVAGTPAKKIKDIDEKTKGKTEIKQELRQL.

Belongs to the transferase hexapeptide repeat family. DapH subfamily.

It catalyses the reaction (S)-2,3,4,5-tetrahydrodipicolinate + acetyl-CoA + H2O = L-2-acetamido-6-oxoheptanedioate + CoA. Its pathway is amino-acid biosynthesis; L-lysine biosynthesis via DAP pathway; LL-2,6-diaminopimelate from (S)-tetrahydrodipicolinate (acetylase route): step 1/3. Catalyzes the transfer of an acetyl group from acetyl-CoA to tetrahydrodipicolinate. This is 2,3,4,5-tetrahydropyridine-2,6-dicarboxylate N-acetyltransferase from Bacillus subtilis (strain 168).